A 168-amino-acid chain; its full sequence is Photosystem I assembly protein Ycf3 (168 aa).

TPR repeat units follow at residues 35 to 68 (AFAYYINGMSAQSEGNYAEALQNYYQAMHLEMDP), 72 to 105 (SYILYNIGIIHTSNGEHSKALEYYCRAIERNPFL), and 120 to 153 (GEQAIQQGDSEIAEAWFDQAAEYWKQARTLTPDN).

The protein belongs to the Ycf3 family.

It localises to the plastid membrane. Essential for the assembly of the photosystem I (PSI) complex. May act as a chaperone-like factor to guide the assembly of the PSI subunits. The sequence is that of Photosystem I assembly protein Ycf3 from Cuscuta obtusiflora (Peruvian dodder).